Consider the following 73-residue polypeptide: Cell division protein ZapB (73 aa).

Positions 3–69 form a coiled coil; sequence LELLSKLETK…EKVTGLVGLL (67 aa). The tract at residues 30–50 is disordered; it reads EKQKSSTLSEHNQQLNEQNQQ. The span at 41 to 50 shows a compositional bias: low complexity; it reads NQQLNEQNQQ.

Belongs to the ZapB family. In terms of assembly, homodimer. The ends of the coiled-coil dimer bind to each other, forming polymers. Interacts with FtsZ.

It is found in the cytoplasm. Its function is as follows. Non-essential, abundant cell division factor that is required for proper Z-ring formation. It is recruited early to the divisome by direct interaction with FtsZ, stimulating Z-ring assembly and thereby promoting cell division earlier in the cell cycle. Its recruitment to the Z-ring requires functional FtsA or ZipA. The polypeptide is Cell division protein ZapB (Shewanella putrefaciens (strain CN-32 / ATCC BAA-453)).